Reading from the N-terminus, the 429-residue chain is Glutamate-1-semialdehyde 2,1-aminomutase (429 aa).

Lysine 267 carries the N6-(pyridoxal phosphate)lysine modification.

It belongs to the class-III pyridoxal-phosphate-dependent aminotransferase family. HemL subfamily. As to quaternary structure, homodimer. Pyridoxal 5'-phosphate is required as a cofactor.

The protein localises to the cytoplasm. The enzyme catalyses (S)-4-amino-5-oxopentanoate = 5-aminolevulinate. It participates in porphyrin-containing compound metabolism; protoporphyrin-IX biosynthesis; 5-aminolevulinate from L-glutamyl-tRNA(Glu): step 2/2. The polypeptide is Glutamate-1-semialdehyde 2,1-aminomutase (Stenotrophomonas maltophilia (strain K279a)).